The following is a 156-amino-acid chain: MPDSSTQDKIVMIATDGACKGNPGFGGWGALLRYQGHEKAISGSENPTTNNRMELQAVIEALSCLKKPCQIELSTDSKYVMDGLTRWIHGWQKNGWLTAAKKPVKNADLWKQLLALTRQHDIAWKWVKGHAGHPDNERADQLASDAAIALMQQEKA.

Residues 7 to 148 form the RNase H type-1 domain; the sequence is QDKIVMIATD…ADQLASDAAI (142 aa). The Mg(2+) site is built by aspartate 16, glutamate 54, aspartate 76, and aspartate 140.

The protein belongs to the RNase H family. Monomer. Mg(2+) serves as cofactor.

The protein localises to the cytoplasm. It catalyses the reaction Endonucleolytic cleavage to 5'-phosphomonoester.. Functionally, endonuclease that specifically degrades the RNA of RNA-DNA hybrids. In Zymomonas mobilis subsp. mobilis (strain ATCC 31821 / ZM4 / CP4), this protein is Ribonuclease H (rnhA).